Reading from the N-terminus, the 341-residue chain is Muscleblind-like protein 1 (341 aa).

Residue Thr-6 is modified to Phosphothreonine. C3H1-type zinc fingers lie at residues 13-41, 47-73, 178-206, and 214-240; these read WLTLEVCREFQRGTCSRPDTECKFAHPSK, NGRVIACFDSLKGRCSRENCKYLHPPP, TDRLEVCREYQRGNCNRGENDCRFAHPAD, and DNTVTVCMDYIKGRCSREKCKYFHPPA.

Belongs to the muscleblind family. As to quaternary structure, interacts with DDX1 and YBX1. Interacts with HNRNPH1; the interaction in RNA-independent. Interacts with RBPMS; the interaction allows cooperative assembly of RNA-bound stable cell-specific alternative splicing regulatory complexes. Highly expressed in cardiac and skeletal muscle. Weakly expressed in heart and eye (at protein level).

Its subcellular location is the nucleus. It localises to the cytoplasm. The protein resides in the cytoplasmic granule. Its function is as follows. Mediates pre-mRNA alternative splicing regulation. Acts either as activator or repressor of splicing on specific pre-mRNA targets. Inhibits cardiac troponin-T (TNNT2) pre-mRNA exon inclusion but induces insulin receptor (IR) pre-mRNA exon inclusion in muscle. Antagonizes the alternative splicing activity pattern of CELF proteins. Regulates the TNNT2 exon 5 skipping through competition with U2AF2. Inhibits the formation of the spliceosome A complex on intron 4 of TNNT2 pre-mRNA. Binds to the stem-loop structure within the polypyrimidine tract of TNNT2 intron 4 during spliceosome assembly. Binds to the 5'-YGCU(U/G)Y-3'consensus sequence. Binds to the IR RNA. Binds to CUG triplet repeat expansion in myotonic dystrophy muscle cells by sequestering the target RNAs. Together with RNA binding proteins RBPMS and RBFOX2, activates vascular smooth muscle cells alternative splicing events. Regulates NCOR2 alternative splicing. This is Muscleblind-like protein 1 (Mbnl1) from Mus musculus (Mouse).